A 629-amino-acid polypeptide reads, in one-letter code: Phosphomethylpyrimidine synthase (629 aa).

A compositionally biased stretch (polar residues) spans methionine 1–aspartate 13. The interval methionine 1–valine 22 is disordered. Substrate is bound by residues asparagine 233, methionine 262, tyrosine 291, histidine 327, serine 347–glycine 349, aspartate 388–arginine 391, and glutamate 427. Zn(2+) is bound at residue histidine 431. Tyrosine 454 serves as a coordination point for substrate. Histidine 495 provides a ligand contact to Zn(2+). The [4Fe-4S] cluster site is built by cysteine 575, cysteine 578, and cysteine 583.

Belongs to the ThiC family. As to quaternary structure, homodimer. It depends on [4Fe-4S] cluster as a cofactor.

It catalyses the reaction 5-amino-1-(5-phospho-beta-D-ribosyl)imidazole + S-adenosyl-L-methionine = 4-amino-2-methyl-5-(phosphooxymethyl)pyrimidine + CO + 5'-deoxyadenosine + formate + L-methionine + 3 H(+). Its pathway is cofactor biosynthesis; thiamine diphosphate biosynthesis. Functionally, catalyzes the synthesis of the hydroxymethylpyrimidine phosphate (HMP-P) moiety of thiamine from aminoimidazole ribotide (AIR) in a radical S-adenosyl-L-methionine (SAM)-dependent reaction. This is Phosphomethylpyrimidine synthase from Pseudomonas fluorescens (strain Pf0-1).